A 386-amino-acid polypeptide reads, in one-letter code: 1-deoxy-D-xylulose 5-phosphate reductoisomerase (386 aa).

Ser-10, Gly-11, Ser-12, Val-13, Asn-38, and Asn-120 together coordinate NADPH. Position 121 (Lys-121) interacts with 1-deoxy-D-xylulose 5-phosphate. Glu-122 contributes to the NADPH binding site. Asp-146 contacts Mn(2+). Positions 147, 148, 172, and 195 each coordinate 1-deoxy-D-xylulose 5-phosphate. Glu-148 provides a ligand contact to Mn(2+). Gly-201 lines the NADPH pocket. 4 residues coordinate 1-deoxy-D-xylulose 5-phosphate: Ser-208, Asn-213, Lys-214, and Glu-217. Glu-217 is a binding site for Mn(2+).

This sequence belongs to the DXR family. It depends on Mg(2+) as a cofactor. The cofactor is Mn(2+).

It carries out the reaction 2-C-methyl-D-erythritol 4-phosphate + NADP(+) = 1-deoxy-D-xylulose 5-phosphate + NADPH + H(+). It participates in isoprenoid biosynthesis; isopentenyl diphosphate biosynthesis via DXP pathway; isopentenyl diphosphate from 1-deoxy-D-xylulose 5-phosphate: step 1/6. Its function is as follows. Catalyzes the NADPH-dependent rearrangement and reduction of 1-deoxy-D-xylulose-5-phosphate (DXP) to 2-C-methyl-D-erythritol 4-phosphate (MEP). The sequence is that of 1-deoxy-D-xylulose 5-phosphate reductoisomerase from Leptospira biflexa serovar Patoc (strain Patoc 1 / Ames).